Consider the following 142-residue polypeptide: MPNFNRHQIRQAAFQVLFTLNANQSLELEDAYQAVLTMDQFDAEEVTPVEVPAYLAFLVSGVTENQAALDAALTPYLKKGWQLSRLAKPDLIILRLGLFEMQNSTEAPAKVALNEALELAKQFTDDQAKGFINGVLSKFVEA.

Belongs to the NusB family.

Involved in transcription antitermination. Required for transcription of ribosomal RNA (rRNA) genes. Binds specifically to the boxA antiterminator sequence of the ribosomal RNA (rrn) operons. This chain is Transcription antitermination protein NusB, found in Latilactobacillus sakei subsp. sakei (strain 23K) (Lactobacillus sakei subsp. sakei).